The sequence spans 798 residues: Integrin beta-5 (798 aa).

The signal sequence occupies residues 1–23 (MPRVPATLYACLLGLCALVPRLA). Residues 24 to 719 (GLNICTSGSA…REPECGSAPN (696 aa)) lie on the Extracellular side of the membrane. The PSI domain occupies 27–76 (ICTSGSATSCEECLLIHPKCAWCSKEYFGNPRSITSRCDLKANLIRNGCE). Cystine bridges form between C28–C46, C36–C463, C39–C64, C49–C75, C202–C211, C259–C300, C401–C413, C433–C461, C465–C484, C476–C487, C489–C498, C500–C530, C513–C528, C522–C533, C535–C548, C550–C571, C555–C569, C563–C574, and C576–C585. In terms of domain architecture, VWFA spans 136–378 (YPVDLYYLMD…QLIINAYSSI (243 aa)). Residues S147 and S149 each coordinate Mg(2+). 4 residues coordinate Ca(2+): S149, D152, D153, and D184. N242, D244, P246, and E247 together coordinate Ca(2+). E247 contributes to the Mg(2+) binding site. A glycan (N-linked (GlcNAc...) asparagine) is linked at N347. Position 362 (G362) interacts with Ca(2+). N-linked (GlcNAc...) asparagine glycans are attached at residues N460 and N479. 4 I-EGF domains span residues 465 to 499 (CSTGLEPNSARCSGNGTYTCGLCECDPGYLGTRCE), 500 to 549 (CQEG…PFCE), 550 to 586 (CDSFSCARNKGVLCSGHGECHCGECKCHAGYIGDNCN), and 587 to 626 (CSTDVSTCKAKDGQICSDRGRCVCGQCQCTEPGAFGETCE). N505 is a glycosylation site (N-linked (GlcNAc...) asparagine). N-linked (GlcNAc...) asparagine glycosylation is present at N586. 9 disulfides stabilise this stretch: C587-C610, C594-C608, C602-C613, C615-C625, C628-C631, C635-C682, C641-C661, C644-C657, and C690-C714. N654 and N705 each carry an N-linked (GlcNAc...) asparagine glycan. A helical membrane pass occupies residues 720 to 742 (AMTILLAVVGSILLIGMALLAIW). Residues 743–798 (KLLVTIHDRREFAKFQSERSRARYEMASNPLYRKPISTHTVDFAFNKFNKSYNGSV) lie on the Cytoplasmic side of the membrane. At S770 the chain carries Phosphoserine.

This sequence belongs to the integrin beta chain family. Heterodimer of an alpha and a beta subunit. Beta-5 (ITGB5) associates with alpha-V (ITGAV). Interacts with MYO10. Interacts with DAB2. Integrin ITGAV:ITGB5 interacts with FBLN5 (via N-terminus). ITGAV:ITGB5 interacts with CCN3. Interacts with tensin TNS3; TNS3 also interacts with PEAK1, thus acting as an adapter molecule to bridge the association of PEAK1 with ITGB5.

It is found in the cell membrane. Its function is as follows. Integrin alpha-V/beta-5 (ITGAV:ITGB5) is a receptor for fibronectin. It recognizes the sequence R-G-D in its ligand. This Mus musculus (Mouse) protein is Integrin beta-5 (Itgb5).